An 88-amino-acid polypeptide reads, in one-letter code: Small ribosomal subunit protein bS16c (88 aa).

The protein belongs to the bacterial ribosomal protein bS16 family.

It is found in the plastid. Its subcellular location is the chloroplast. This Atropa belladonna (Belladonna) protein is Small ribosomal subunit protein bS16c.